Here is a 146-residue protein sequence, read N- to C-terminus: Large ribosomal subunit protein uL15 (146 aa).

Residues 1–18 show a composition bias toward basic and acidic residues; it reads MKLHELKAAEGTRKERNR. The tract at residues 1–58 is disordered; the sequence is MKLHELKAAEGTRKERNRVGRGMSSGNGKTSGRGHKGQKARSGGGVRPGFEGGQMPLF. Residues 42 to 52 are compositionally biased toward gly residues; sequence SGGGVRPGFEG.

It belongs to the universal ribosomal protein uL15 family. Part of the 50S ribosomal subunit.

Binds to the 23S rRNA. The sequence is that of Large ribosomal subunit protein uL15 from Oceanobacillus iheyensis (strain DSM 14371 / CIP 107618 / JCM 11309 / KCTC 3954 / HTE831).